The primary structure comprises 50 residues: Capsid protein G8P (50 aa).

At 1–21 (AEGDDPAKAAFDSLQASATEY) the chain is on the periplasmic side. The chain crosses the membrane as a helical span at residues 22–42 (IGYAWAMVVVIVGATIGIKLF). The Cytoplasmic segment spans residues 43–50 (KKFASKAS).

Belongs to the inovirus capsid protein family. As to quaternary structure, homomultimerizes. There are several thousands of this protein in the phage capsid.

The protein localises to the virion. Its subcellular location is the host membrane. Its function is as follows. Self assembles to form a helical capsid wrapping up the viral genomic DNA. The capsid displays a filamentous structure with a length of 760-1950 nm and a width of 6-8 nm. The virion assembly and budding take place at the host inner membrane. The sequence is that of Capsid protein G8P (VIII) from Escherichia coli (Bacteriophage ZJ-2).